Consider the following 523-residue polypeptide: Nitrogenase molybdenum-iron protein beta chain (523 aa).

Positions 70, 95, 153, and 188 each coordinate [8Fe-7S] cluster.

This sequence belongs to the NifD/NifK/NifE/NifN family. As to quaternary structure, tetramer of two alpha and two beta chains. Forms complex with the iron protein (nitrogenase component 2). Requires [8Fe-7S] cluster as cofactor.

The catalysed reaction is N2 + 8 reduced [2Fe-2S]-[ferredoxin] + 16 ATP + 16 H2O = H2 + 8 oxidized [2Fe-2S]-[ferredoxin] + 2 NH4(+) + 16 ADP + 16 phosphate + 6 H(+). With respect to regulation, nitrogenase holoenzyme is subject to 'conformational protection' by FeSII; under oxidizing conditions FeSII binds to the holoenzyme and reversibly protects it from oxidation. In terms of biological role, this molybdenum-iron protein is part of the nitrogenase complex that catalyzes the key enzymatic reactions in nitrogen fixation. The protein is Nitrogenase molybdenum-iron protein beta chain (nifK) of Azotobacter vinelandii.